A 593-amino-acid chain; its full sequence is Aspartate--tRNA(Asp/Asn) ligase (593 aa).

Glu173 contributes to the L-aspartate binding site. The tract at residues 197–200 (QLFK) is aspartate. Arg219 contributes to the L-aspartate binding site. Residues 219 to 221 (RDE) and Gln228 contribute to the ATP site. His451 is an L-aspartate binding site. Residue Glu485 coordinates ATP. Residue Arg492 coordinates L-aspartate. 537 to 540 (GIDR) contacts ATP.

Belongs to the class-II aminoacyl-tRNA synthetase family. Type 1 subfamily. Homodimer.

The protein localises to the cytoplasm. It catalyses the reaction tRNA(Asx) + L-aspartate + ATP = L-aspartyl-tRNA(Asx) + AMP + diphosphate. Aspartyl-tRNA synthetase with relaxed tRNA specificity since it is able to aspartylate not only its cognate tRNA(Asp) but also tRNA(Asn). Reaction proceeds in two steps: L-aspartate is first activated by ATP to form Asp-AMP and then transferred to the acceptor end of tRNA(Asp/Asn). The protein is Aspartate--tRNA(Asp/Asn) ligase of Legionella pneumophila subsp. pneumophila (strain Philadelphia 1 / ATCC 33152 / DSM 7513).